We begin with the raw amino-acid sequence, 293 residues long: Mitochondrial inner membrane protease atp23 (293 aa).

The segment at 1 to 51 (MSPAPTTSAGPASSGIPPSSLPTSTVTEDDTKPSSSSSKANDLLPRYLTND) is disordered. Over residues 8–22 (SAGPASSGIPPSSLP) the composition is skewed to low complexity. Residue H190 coordinates a divalent metal cation. Residue E191 is part of the active site. Residue H194 coordinates a divalent metal cation.

The protein belongs to the peptidase M76 family.

Its subcellular location is the mitochondrion inner membrane. Has a dual role in the assembly of mitochondrial ATPase. Acts as a protease that removes N-terminal residues of mitochondrial ATPase CF(0) subunit 6 at the intermembrane space side. Also involved in the correct assembly of the membrane-embedded ATPase CF(0) particle, probably mediating association of subunit 6 with the subunit 9 ring. The sequence is that of Mitochondrial inner membrane protease atp23 (atp23) from Neurospora crassa (strain ATCC 24698 / 74-OR23-1A / CBS 708.71 / DSM 1257 / FGSC 987).